The following is a 257-amino-acid chain: MIGRERMTVVSQRMIAERTYELTLSGQLVAQMNEPGQFVHIKVAEAADPLLRRPLSLCQIDHKQGQCIIIYRQEGKGTALLTQKQPGDRVDVLGPLGHGFPLDAAPAGGRALLVGGGIGVPPLYELAKQLANRGVNVVSVLGFATKAAVFYEAEFAAFGETYIATDDGSYGMAGRVTDVIEQQGLSFDVLYACGPKPMLKALDERFRGRPVYLSLEERMGCGVGACFACVCHVPGSETAYKKVCSDGPVFRAGEVVL.

The 101-residue stretch at 2-102 (IGRERMTVVS…LGPLGHGFPL (101 aa)) folds into the FAD-binding FR-type domain. Residues 53-56 (RPLS), 70-72 (IYR), and 77-78 (GT) contribute to the FAD site. The [2Fe-2S] cluster site is built by C221, C226, C229, and C244.

The protein belongs to the PyrK family. Heterotetramer of 2 PyrK and 2 PyrD type B subunits. The cofactor is [2Fe-2S] cluster. Requires FAD as cofactor.

It participates in pyrimidine metabolism; UMP biosynthesis via de novo pathway; orotate from (S)-dihydroorotate (NAD(+) route): step 1/1. Responsible for channeling the electrons from the oxidation of dihydroorotate from the FMN redox center in the PyrD type B subunit to the ultimate electron acceptor NAD(+). The sequence is that of Dihydroorotate dehydrogenase B (NAD(+)), electron transfer subunit from Geobacillus thermodenitrificans (strain NG80-2).